We begin with the raw amino-acid sequence, 218 residues long: Sec-independent protein translocase protein TatB (218 aa).

A helical transmembrane segment spans residues 1–21 (MFDIGFSELLLVLVIGLVVLG). 2 disordered regions span residues 126–145 (AESATKAQASPQAPATDVDK) and 174–218 (SSVD…GGDR). The segment covering 199-218 (HSTDSHGADQPRTHQPGGDR) has biased composition (basic and acidic residues).

It belongs to the TatB family. In terms of assembly, the Tat system comprises two distinct complexes: a TatABC complex, containing multiple copies of TatA, TatB and TatC subunits, and a separate TatA complex, containing only TatA subunits. Substrates initially bind to the TatABC complex, which probably triggers association of the separate TatA complex to form the active translocon.

The protein localises to the cell inner membrane. In terms of biological role, part of the twin-arginine translocation (Tat) system that transports large folded proteins containing a characteristic twin-arginine motif in their signal peptide across membranes. Together with TatC, TatB is part of a receptor directly interacting with Tat signal peptides. TatB may form an oligomeric binding site that transiently accommodates folded Tat precursor proteins before their translocation. The polypeptide is Sec-independent protein translocase protein TatB (Yersinia enterocolitica serotype O:8 / biotype 1B (strain NCTC 13174 / 8081)).